The sequence spans 235 residues: Probable transcriptional regulatory protein CJJ81176_1187 (235 aa).

It belongs to the TACO1 family.

The protein localises to the cytoplasm. The protein is Probable transcriptional regulatory protein CJJ81176_1187 of Campylobacter jejuni subsp. jejuni serotype O:23/36 (strain 81-176).